The primary structure comprises 172 residues: Lipoprotein signal peptidase (172 aa).

A run of 4 helical transmembrane segments spans residues 4–24 (LSSS…LDQV), 39–59 (VAIL…AFSF), 69–89 (WFFT…LAKL), and 93–113 (WTLE…NVID). Catalysis depends on residues Asp122 and Asp140. The helical transmembrane segment at 136–156 (FNVADMGISIGAVLLIISEFW) threads the bilayer.

It belongs to the peptidase A8 family.

The protein localises to the cell inner membrane. It catalyses the reaction Release of signal peptides from bacterial membrane prolipoproteins. Hydrolyzes -Xaa-Yaa-Zaa-|-(S,diacylglyceryl)Cys-, in which Xaa is hydrophobic (preferably Leu), and Yaa (Ala or Ser) and Zaa (Gly or Ala) have small, neutral side chains.. It participates in protein modification; lipoprotein biosynthesis (signal peptide cleavage). Functionally, this protein specifically catalyzes the removal of signal peptides from prolipoproteins. The chain is Lipoprotein signal peptidase from Hydrogenovibrio crunogenus (strain DSM 25203 / XCL-2) (Thiomicrospira crunogena).